Here is a 350-residue protein sequence, read N- to C-terminus: MTKHYLNSKYQSEQRSSAMKKITMGTASIILGSLVYIGADSQQVNAATEATNAPNNQSTQVSQATSQPINFQVQKDGSSEKSHMDDYMQHPGKVIKQNNKYYFQTVLNNASFWKEYKFYNANNQELATTVVNDNKKADTRTINVAVEPGYKSLTTKVHIVVPQINYNHRYTTHLEFEKAIPTLADAAKPNNVKPVQPKPAQPKTPTEQTKPVQPKVEKVKPTVTTTSKVEDNHSTKVVSTDTTKDQTKTQTAHTVKTAQTAQEQNKVQTPVKDVATAKSESNNQAVSDNKSQQTNKVTKHNETPKQASKAKELPKTGLTSVDNFISTVAFATLALLGSLSLLLFKRKESK.

An N-terminal signal peptide occupies residues 1 to 46 (MTKHYLNSKYQSEQRSSAMKKITMGTASIILGSLVYIGADSQQVNA). In terms of domain architecture, NEAT spans 62 to 184 (SQATSQPINF…EFEKAIPTLA (123 aa)). Residues Lys-75, Ser-82, and Tyr-166 each coordinate heme. The disordered stretch occupies residues 188-314 (KPNNVKPVQP…KQASKAKELP (127 aa)). Residues 203–214 (KTPTEQTKPVQP) show a composition bias toward low complexity. Composition is skewed to polar residues over residues 252 to 268 (AHTV…NKVQ) and 278 to 296 (KSES…QTNK). A compositionally biased stretch (basic and acidic residues) spans 299-314 (KHNETPKQASKAKELP). The short motif at 313-317 (LPKTG) is the LPXTG sorting signal element. Thr-316 bears the Pentaglycyl murein peptidoglycan amidated threonine mark. Positions 317 to 350 (GLTSVDNFISTVAFATLALLGSLSLLLFKRKESK) are cleaved as a propeptide — removed by sortase A.

It belongs to the IsdA family. In terms of assembly, monomer. Interacts with IsdC. Interacts with IsdB.

It localises to the secreted. The protein localises to the cell wall. Its function is as follows. Cell wall-anchored surface receptor that participates in the extraction of heme from oxidized methemoglobin/metHb to enable growth on hemoglobin as a sole iron source. Receives heme from IsdB and transfers it to IsdC. Also plays a role in the inhibition of host immune response. Protects S.aureus against the bactericidal protease activity of apolactoferrin. Decreases bacterial cellular hydrophobicity, which renders S.aureus resistant to bactericidal human skin fatty acids as well as to beta-defensins and cathelicidin. Also binds fibronectin and chains B-beta and gamma of fibrinogen, promoting clumping of S.aureus with fibrinogen. Involved in adherence of S.aureus to human desquamated nasal epithelial cells and is required for nasal colonization. This is Iron-regulated surface determinant protein A (isdA) from Staphylococcus aureus (strain COL).